We begin with the raw amino-acid sequence, 135 residues long: Hemoglobin subunit alpha (135 aa).

The 135-residue stretch at 1–135 (AAVVALWGKI…VALALAERYK (135 aa)) folds into the Globin domain. His-52 is an O2 binding site. His-81 provides a ligand contact to heme b.

This sequence belongs to the globin family. In terms of assembly, hb1 is a heterotetramer of two alpha chains and two beta-1 chains. Hb2 is a heterotetramer of two alpha chains and two beta-2 chains. In terms of processing, the N-terminus is blocked. Red blood cells.

In terms of biological role, involved in oxygen transport from gills to the various peripheral tissues. The sequence is that of Hemoglobin subunit alpha from Dissostichus eleginoides (Patagonian toothfish).